Consider the following 480-residue polypeptide: Oxysterol-binding protein-related protein 2 (480 aa).

Residues 1–60 form a disordered region; sequence MNGEEEFFDAVTGFDSDNSSGEFSEANQKVTGMIDLDTSKNNRIGKTGERPSQENGIQKH. Over residues 15–30 the composition is skewed to polar residues; the sequence is DSDNSSGEFSEANQKV. Phosphoserine is present on residues Ser-19 and Ser-20. Residues Lys-90, 178–179, and 427–431 contribute to the a 1,2-diacyl-sn-glycero-3-phospho-(1D-myo-inositol-4,5-bisphosphate) site; these read HH and EEKQR.

It belongs to the OSBP family. Monomer. Homotetramer; phosphatidylinositol-4,5-bisphosphate binding promotes formation of stable tetramers. Interacts with DIAPH1. Widely expressed.

It is found in the cytoplasm. Its subcellular location is the cytosol. It localises to the lipid droplet. The protein localises to the cell membrane. Its function is as follows. Intracellular transport protein that binds sterols and phospholipids and mediates lipid transport between intracellular compartments. Increases plasma membrane cholesterol levels and decreases phosphatidylinositol-4,5-bisphosphate levels in the cell membrane. Binds phosphoinositides, such as phosphatidylinositol-4,5-bisphosphate. Exhibits strong binding to phosphatidic acid and weak binding to phosphatidylinositol 3-phosphate. Binds cholesterol, dehydroergosterol, 22(R)-hydroxycholesterol and 25-hydroxycholesterol (in vitro). The sequence is that of Oxysterol-binding protein-related protein 2 (OSBPL2) from Homo sapiens (Human).